We begin with the raw amino-acid sequence, 234 residues long: Glucosamine-6-phosphate deaminase (234 aa).

The active-site Proton acceptor; for enolization step is aspartate 62. Asparagine 128 acts as the For ring-opening step in catalysis. Catalysis depends on histidine 130, which acts as the Proton acceptor; for ring-opening step. The active-site For ring-opening step is glutamate 135.

The protein belongs to the glucosamine/galactosamine-6-phosphate isomerase family. NagB subfamily.

It catalyses the reaction alpha-D-glucosamine 6-phosphate + H2O = beta-D-fructose 6-phosphate + NH4(+). The protein operates within amino-sugar metabolism; N-acetylneuraminate degradation; D-fructose 6-phosphate from N-acetylneuraminate: step 5/5. In terms of biological role, catalyzes the reversible isomerization-deamination of glucosamine 6-phosphate (GlcN6P) to form fructose 6-phosphate (Fru6P) and ammonium ion. The polypeptide is Glucosamine-6-phosphate deaminase (Ligilactobacillus salivarius (strain UCC118) (Lactobacillus salivarius)).